Here is a 218-residue protein sequence, read N- to C-terminus: UPF0502 protein Shewana3_1622 (218 aa).

Belongs to the UPF0502 family.

This Shewanella sp. (strain ANA-3) protein is UPF0502 protein Shewana3_1622.